The chain runs to 420 residues: Pyridinium-3,5-bisthiocarboxylic acid mononucleotide nickel insertion protein (420 aa).

This sequence belongs to the LarC family.

The catalysed reaction is Ni(II)-pyridinium-3,5-bisthiocarboxylate mononucleotide = pyridinium-3,5-bisthiocarboxylate mononucleotide + Ni(2+). In terms of biological role, involved in the biosynthesis of a nickel-pincer cofactor ((SCS)Ni(II) pincer complex). Binds Ni(2+), and functions in nickel delivery to pyridinium-3,5-bisthiocarboxylic acid mononucleotide (P2TMN), to form the mature cofactor. Is required for the activation of the lactate racemase LarA. May also be involved in the activation of other nickel-pincer cofactor-dependent enzymes. This chain is Pyridinium-3,5-bisthiocarboxylic acid mononucleotide nickel insertion protein, found in Lactiplantibacillus plantarum (strain ATCC BAA-793 / NCIMB 8826 / WCFS1) (Lactobacillus plantarum).